The sequence spans 391 residues: NAD(P)H-quinone oxidoreductase subunit H, chloroplastic (391 aa).

It belongs to the complex I 49 kDa subunit family. In terms of assembly, NDH is composed of at least 16 different subunits, 5 of which are encoded in the nucleus.

It localises to the plastid. Its subcellular location is the chloroplast thylakoid membrane. It catalyses the reaction a plastoquinone + NADH + (n+1) H(+)(in) = a plastoquinol + NAD(+) + n H(+)(out). The catalysed reaction is a plastoquinone + NADPH + (n+1) H(+)(in) = a plastoquinol + NADP(+) + n H(+)(out). Its function is as follows. NDH shuttles electrons from NAD(P)H:plastoquinone, via FMN and iron-sulfur (Fe-S) centers, to quinones in the photosynthetic chain and possibly in a chloroplast respiratory chain. The immediate electron acceptor for the enzyme in this species is believed to be plastoquinone. Couples the redox reaction to proton translocation, and thus conserves the redox energy in a proton gradient. This chain is NAD(P)H-quinone oxidoreductase subunit H, chloroplastic, found in Chaetosphaeridium globosum (Charophycean green alga).